We begin with the raw amino-acid sequence, 1095 residues long: Putative disease resistance protein At4g11170 (1095 aa).

The TIR domain occupies 9-173; the sequence is WRYDVFPSFR…TISKDVLEKL (165 aa). Glu84 is an active-site residue. The NB-ARC domain occupies 168–454; it reads DVLEKLNATP…HENYLKQMII (287 aa). LRR repeat units lie at residues 609-631, 632-654, 655-677, 679-701, 702-722, and 723-744; these read CLVELNMSHSKLKKLWSGVQPLR, NLRTMNLNSSRNLEILPNLMEAT, KLNRLDLGWCESLVELPSSIKNL, HLILLEMSCCKKLEIIPTNINLP, SLEVLHFRYCTRLQTFPEIST, and NIRLLNLIGTAITEVPPSVKYW.

The catalysed reaction is NAD(+) + H2O = ADP-D-ribose + nicotinamide + H(+). The chain is Putative disease resistance protein At4g11170 from Arabidopsis thaliana (Mouse-ear cress).